Consider the following 581-residue polypeptide: Interleukin-22 receptor subunit alpha-1 (581 aa).

The N-terminal stretch at 1 to 15 (MRTLLTILAAGSLLA) is a signal peptide. The Extracellular segment spans residues 16–228 (HITEDTSDLL…VKTLPDRTWT (213 aa)). Fibronectin type-III domains are found at residues 18–115 (TEDT…RFSS) and 141–221 (PTYT…RVKT). A disulfide bridge connects residues Cys-71 and Cys-79. Asn-80 carries an N-linked (GlcNAc...) asparagine glycan. Cys-128 and Cys-217 are joined by a disulfide. The chain crosses the membrane as a helical span at residues 229–249 (YSFSGAFLFSLGFLVAGLCYL). Over 250-581 (SYRYITKPPP…GLALTVQWES (332 aa)) the chain is Cytoplasmic. Disordered stretches follow at residues 354–493 (QAAP…SSLK) and 539–563 (PSDE…LESP). The span at 378 to 389 (TPQAVSETQLPS) shows a compositional bias: polar residues. Residues Ser-410 and Ser-414 each carry the phosphoserine modification. Residues 440 to 449 (CSPTGLSLQE) are compositionally biased toward polar residues.

Belongs to the type II cytokine receptor family. In terms of assembly, heterodimer with IL10RB and with IL20RB. Interacts with FBXW12; the interaction promotes ubiquitination of IL22RA1. In terms of processing, ubiquitinated.

The protein localises to the cell membrane. In terms of biological role, component of the receptor for IL20, IL22 and IL24. Component of IL22 receptor formed by IL22RA1 and IL10RB enabling IL22 signaling via JAK/STAT pathways. IL22 also induces activation of MAPK1/MAPK3 and Akt kinases pathways. Component of one of the receptor for IL20 and IL24 formed by IL22RA1 and IL20RB also signaling through STATs activation. Mediates IL24 antiangiogenic activity as well as IL24 inhibitory effect on endothelial cell tube formation and differentiation. The protein is Interleukin-22 receptor subunit alpha-1 (IL22RA1) of Bos taurus (Bovine).